Here is a 437-residue protein sequence, read N- to C-terminus: Trigger factor (437 aa).

The PPIase FKBP-type domain occupies 163-248 (GHMVTIDYAF…LNEIKRKELP (86 aa)).

The protein belongs to the FKBP-type PPIase family. Tig subfamily.

The protein localises to the cytoplasm. It carries out the reaction [protein]-peptidylproline (omega=180) = [protein]-peptidylproline (omega=0). In terms of biological role, involved in protein export. Acts as a chaperone by maintaining the newly synthesized protein in an open conformation. Functions as a peptidyl-prolyl cis-trans isomerase. The polypeptide is Trigger factor (Pelobacter propionicus (strain DSM 2379 / NBRC 103807 / OttBd1)).